Reading from the N-terminus, the 143-residue chain is Mannitol-specific phosphotransferase enzyme IIA component (143 aa).

Residues Gln-2–Val-142 form the PTS EIIA type-2 domain. Catalysis depends on His-62, which acts as the Tele-phosphohistidine intermediate. Position 62 is a phosphohistidine; by HPr (His-62). Ser-74 is modified (phosphoserine).

Its subcellular location is the cytoplasm. The phosphoenolpyruvate-dependent sugar phosphotransferase system (sugar PTS), a major carbohydrate active transport system, catalyzes the phosphorylation of incoming sugar substrates concomitantly with their translocation across the cell membrane. The enzyme II CmtAB PTS system is involved in D-mannitol transport. This is Mannitol-specific phosphotransferase enzyme IIA component (mtlF) from Bacillus subtilis (strain 168).